A 32-amino-acid polypeptide reads, in one-letter code: Dermaseptin-8 (32 aa).

Glutamine 32 carries the glutamine amide modification.

As to expression, expressed by the skin glands.

It is found in the secreted. Its function is as follows. Antimicrobial peptide, active against the Gram-positive bacterium S.aureus, and the Gram-negative bacteriun E.coli. Has hemolytic activity at 432 uM. The protein is Dermaseptin-8 of Phyllomedusa tarsius (Brownbelly leaf frog).